Consider the following 448-residue polypeptide: Argininosuccinate synthase (448 aa).

ATP-binding positions include 17 to 25 (AFSGGLDTS) and Ala43. Tyr99 lines the L-citrulline pocket. Positions 129 and 131 each coordinate ATP. Positions 131, 135, and 136 each coordinate L-aspartate. Asn135 serves as a coordination point for L-citrulline. Asp136 provides a ligand contact to ATP. L-citrulline is bound by residues Arg139 and Ser192. An ATP-binding site is contributed by Asp194. Residues Thr201, Glu203, and Glu280 each coordinate L-citrulline.

Belongs to the argininosuccinate synthase family. Type 2 subfamily. In terms of assembly, homotetramer.

It is found in the cytoplasm. It carries out the reaction L-citrulline + L-aspartate + ATP = 2-(N(omega)-L-arginino)succinate + AMP + diphosphate + H(+). The protein operates within amino-acid biosynthesis; L-arginine biosynthesis; L-arginine from L-ornithine and carbamoyl phosphate: step 2/3. The chain is Argininosuccinate synthase from Acidovorax ebreus (strain TPSY) (Diaphorobacter sp. (strain TPSY)).